Consider the following 124-residue polypeptide: Putative peptidyl-tRNA hydrolase (124 aa).

It belongs to the PTH2 family.

It carries out the reaction an N-acyl-L-alpha-aminoacyl-tRNA + H2O = an N-acyl-L-amino acid + a tRNA + H(+). This chain is Putative peptidyl-tRNA hydrolase, found in Fowlpox virus (strain NVSL) (FPV).